The sequence spans 3411 residues: Genome polyprotein (3411 aa).

Over 1-104 (MSGRKAQGKT…LSSRKRRSHD (104 aa)) the chain is Cytoplasmic. The tract at residues 38–72 (PGPSRGVQGFIFFFLFNILTGKKITAHLKRLWKML) is hydrophobic; homodimerization of capsid protein C. The propeptide at 102 to 121 (SHDVLTVQFLILGMLLMTGG) is ER anchor for the capsid protein C, removed in mature form by serine protease NS3. Residues 105 to 125 (VLTVQFLILGMLLMTGGVTLV) form a helical membrane-spanning segment. The Extracellular segment spans residues 126–244 (RKNRWLLLNV…GERQLQKIER (119 aa)). N134 and N150 each carry an N-linked (GlcNAc...) asparagine; by host glycan. The chain crosses the membrane as a helical span at residues 245–265 (WFVRNPFFAVTALTIAYLVGS). Over 266–270 (NMTQR) the chain is Cytoplasmic. Residues 271–285 (VVIALLVLAVGPAYS) traverse the membrane as a helical segment. Topologically, residues 286–730 (AHCIGITDRD…TVFGSAFQGL (445 aa)) are extracellular. Cystine bridges form between C288/C315, C345/C401, C345/C406, C359/C390, C377/C401, C377/C406, C467/C568, and C585/C615. The segment at 383 to 396 (DRGWGNGCGLFGKG) is fusion peptide. The helical transmembrane segment at 731–751 (FGGLNWITKVIMGAVLIWVGI) threads the bilayer. Over 752-757 (NTRNMT) the chain is Extracellular. The chain crosses the membrane as a helical span at residues 758–778 (MSMSMILVGVIMMFLSLGVGA). Over 779 to 1132 (DQGCAINFGK…LVRSWVTAGE (354 aa)) the chain is Extracellular. 6 disulfides stabilise this stretch: C782-C793, C833-C921, C957-C1002, C1058-C1107, C1069-C1091, and C1090-C1094. N-linked (GlcNAc...) asparagine; by host glycosylation is found at N908 and N986. The chain crosses the membrane as a helical span at residues 1133 to 1153 (IHAVPFGLVSMMIAMEVVLRK). The Cytoplasmic segment spans residues 1154 to 1201 (RQGPKQMLVGGVVLLGAMLVGQVTLLDLLKLTVAVGLHFHEMNNGGDA). The chain crosses the membrane as a helical span at residues 1202–1222 (MYMALIAAFSIRPGLLIGFGL). The Lumenal portion of the chain corresponds to 1223–1287 (RTLWSPRERL…ILPLMALLTP (65 aa)). Residues 1288-1308 (VTMAEVRLAAMFFCAVVIIGV) traverse the membrane as a helical segment. The Cytoplasmic segment spans residues 1309 to 1355 (LHQNFKDTSMQKTIPLVALTLTSYLGLTQPFLGLCAFLATRIFGRRS). Residues 1356-1376 (IPVNEALAAAGLVGVLAGLAF) traverse the membrane as a helical segment. Topologically, residues 1377-1378 (QE) are lumenal. A helical membrane pass occupies residues 1379 to 1399 (MENFLGPIAVGGLLMMLVSVA). Over 1400 to 1456 (GRVDGLELKKLGEVSWEEEAEISGSSARYDVALSEQGEFKLLSEEKVPWDQVVMTSL) the chain is Cytoplasmic. Residues 1407–1446 (LKKLGEVSWEEEAEISGSSARYDVALSEQGEFKLLSEEKV) are interacts with and activates NS3 protease. The segment at residues 1457 to 1477 (ALVGAALHPFALLLVLAGWLF) is an intramembrane region (helical). Topologically, residues 1478–2157 (HVRGARRSGD…RNALSMMPEA (680 aa)) are cytoplasmic. The 181-residue stretch at 1485–1665 (SGDVLWDIPT…EVKEEGKEEL (181 aa)) folds into the Peptidase S7 domain. Catalysis depends on charge relay system; for serine protease NS3 activity residues H1537, D1561, and S1622. Residues 1669-1825 (PTMLKKGMTT…HSNGEIEDVQ (157 aa)) form the Helicase ATP-binding domain. An important for RNA-binding region spans residues 1673–1676 (KKGM). 1682-1689 (FHPGAGKT) contributes to the ATP binding site. The DEAH box motif lies at 1773-1776 (DEAH). Residues 1820–1997 (EIEDVQTDIP…VRGGMVAPLY (178 aa)) enclose the Helicase C-terminal domain. The residue at position 1877 (K1877) is an N6-acetyllysine; by host. A helical membrane pass occupies residues 2158-2178 (MTIVMLFILAGLLTSGMVIFF). At 2179-2186 (MSPKGISR) the chain is on the lumenal side. An intramembrane region (helical) is located at residues 2187 to 2207 (MSMAMGTMAGCGYLMFLGGVK). The Lumenal portion of the chain corresponds to 2208 to 2209 (PT). A helical transmembrane segment spans residues 2210–2230 (HISYVMLIFFVLMVVVIPEPG). Over 2231 to 2241 (QQRSIQDNQVA) the chain is Cytoplasmic. A helical membrane pass occupies residues 2242 to 2262 (YLIIGILTLVSAVAANELGML). The Lumenal portion of the chain corresponds to 2263–2293 (EKTKEDLFGKKNLIPSSASPWSWPDLDLKPG). The segment at residues 2294-2314 (AAWTVYVGIVTMLSPMLHHWI) is an intramembrane region (helical). The Lumenal portion of the chain corresponds to 2315-2360 (KVEYGNLSLSGIAQSASVLSFMDKGIPFMKMNISVIMLLVSGWNSI). Residues 2361 to 2381 (TVMPLLCGIGCAMLHWSLILP) form a helical membrane-spanning segment. Residues 2382–2421 (GIKAQQSKLAQRRVFHGVAENPVVDGNPTVDIEEAPEMPA) are Cytoplasmic-facing. The chain crosses the membrane as a helical span at residues 2422–2442 (LYEKKLALYLLLALSLASVAM). The Lumenal segment spans residues 2443 to 2445 (CRT). A helical transmembrane segment spans residues 2446 to 2466 (PFSLAEGIVLASAALGPLIEG). Residues 2467–3411 (NTSLLWNGPM…DADLQLGELI (945 aa)) are Cytoplasmic-facing. Residues 2507–2771 (GSANGKTLGE…DVILPIGTRS (265 aa)) enclose the mRNA cap 0-1 NS5-type MT domain. S2562 lines the S-adenosyl-L-methionine pocket. S2562 bears the Phosphoserine mark. K2567 (for 2'-O-MTase activity) is an active-site residue. Residues G2592, W2593, T2610, L2611, D2637, and I2638 each contribute to the S-adenosyl-L-methionine site. D2652 serves as the catalytic For 2'-O-MTase activity. I2653 contributes to the S-adenosyl-L-methionine binding site. Active-site for 2'-O-MTase activity residues include K2688 and E2724. An S-adenosyl-L-methionine-binding site is contributed by Y2726. Residues 2878 to 2911 (RKIMKVVNRWLFRHLAREKNPRLCTKEEFIAKVR) carry the Nuclear localization signal motif. The Zn(2+) site is built by E2945, H2949, C2954, and C2957. One can recognise a RdRp catalytic domain in the interval 3035–3187 (GGFYADDTAG…RPIDDRFGLA (153 aa)). Zn(2+) is bound by residues H3222, C3238, and C3357.

It in the N-terminal section; belongs to the class I-like SAM-binding methyltransferase superfamily. mRNA cap 0-1 NS5-type methyltransferase family. As to quaternary structure, homodimer. Interacts (via N-terminus) with host EXOC1 (via C-terminus); this interaction results in EXOC1 degradation through the proteasome degradation pathway. In terms of assembly, forms heterodimers with envelope protein E in the endoplasmic reticulum and Golgi. Homodimer; in the endoplasmic reticulum and Golgi. Interacts with protein prM. Interacts with non-structural protein 1. As to quaternary structure, homodimer; Homohexamer when secreted. Interacts with envelope protein E. In terms of assembly, interacts (via N-terminus) with serine protease NS3. Forms a heterodimer with serine protease NS3. May form homooligomers. As to quaternary structure, forms a heterodimer with NS2B. Interacts with non-structural protein 2A (via N-terminus). Interacts with NS4B. Interacts with unphosphorylated RNA-directed RNA polymerase NS5; this interaction stimulates RNA-directed RNA polymerase NS5 guanylyltransferase activity. NS3 interacts with host PDCD6IP; this interaction contributes to virion release. In terms of assembly, interacts with serine protease NS3. Homodimer. Interacts with host STAT2; this interaction prevents the establishment of cellular antiviral state. Interacts with serine protease NS3. Interacts with host TRIM23; this interaction leads to NS5 ubiquitination. In terms of processing, specific enzymatic cleavages in vivo yield mature proteins. The nascent capsid protein C contains a C-terminal hydrophobic domain that act as a signal sequence for translocation of prM into the lumen of the ER. Mature capsid protein C is cleaved at a site upstream of this hydrophobic domain by NS3. prM is cleaved in post-Golgi vesicles by a host furin, releasing the mature small envelope protein M, and peptide pr. Non-structural protein 2A-alpha, a C-terminally truncated form of non-structural protein 2A, results from partial cleavage by NS3. Specific enzymatic cleavages in vivo yield mature proteins peptide 2K acts as a signal sequence and is removed from the N-terminus of NS4B by the host signal peptidase in the ER lumen. Signal cleavage at the 2K-4B site requires a prior NS3 protease-mediated cleavage at the 4A-2K site. Cleaved in post-Golgi vesicles by a host furin, releasing the mature small envelope protein M, and peptide pr. This cleavage is incomplete as up to 30% of viral particles still carry uncleaved prM. Post-translationally, N-glycosylated. In terms of processing, N-glycosylated. The excreted form is glycosylated and this is required for efficient secretion of the protein from infected cells. Polyubiquitinated; ubiquitination is probably mediated by host TRIM23 and is prerequisite for NS5-STAT2 interaction. NS5 is not ISGylated or sumoylated. Post-translationally, acetylated by host KAT5. Acetylation modulates NS3 RNA-binding and unwinding activities and plays an important positive role for viral replication. In terms of processing, phosphorylated on serines residues. This phosphorylation may trigger NS5 nuclear localization.

It is found in the virion. The protein resides in the host nucleus. The protein localises to the host cytoplasm. It localises to the host perinuclear region. Its subcellular location is the secreted. It is found in the virion membrane. The protein resides in the host endoplasmic reticulum membrane. It carries out the reaction Selective hydrolysis of -Xaa-Xaa-|-Yaa- bonds in which each of the Xaa can be either Arg or Lys and Yaa can be either Ser or Ala.. The enzyme catalyses RNA(n) + a ribonucleoside 5'-triphosphate = RNA(n+1) + diphosphate. It catalyses the reaction a ribonucleoside 5'-triphosphate + H2O = a ribonucleoside 5'-diphosphate + phosphate + H(+). The catalysed reaction is ATP + H2O = ADP + phosphate + H(+). It carries out the reaction a 5'-end (5'-triphosphoguanosine)-ribonucleoside in mRNA + S-adenosyl-L-methionine = a 5'-end (N(7)-methyl 5'-triphosphoguanosine)-ribonucleoside in mRNA + S-adenosyl-L-homocysteine. The enzyme catalyses a 5'-end (N(7)-methyl 5'-triphosphoguanosine)-ribonucleoside in mRNA + S-adenosyl-L-methionine = a 5'-end (N(7)-methyl 5'-triphosphoguanosine)-(2'-O-methyl-ribonucleoside) in mRNA + S-adenosyl-L-homocysteine + H(+). Plays a role in virus budding by binding to the cell membrane and gathering the viral RNA into a nucleocapsid that forms the core of a mature virus particle. During virus entry, may induce genome penetration into the host cytoplasm after hemifusion induced by the surface proteins. Can migrate to the cell nucleus where it modulates host functions. In terms of biological role, inhibits RNA silencing by interfering with host Dicer. Its function is as follows. Prevents premature fusion activity of envelope proteins in trans-Golgi by binding to envelope protein E at pH6.0. After virion release in extracellular space, gets dissociated from E dimers. Functionally, acts as a chaperone for envelope protein E during intracellular virion assembly by masking and inactivating envelope protein E fusion peptide. prM is the only viral peptide matured by host furin in the trans-Golgi network probably to avoid catastrophic activation of the viral fusion activity in acidic Golgi compartment prior to virion release. prM-E cleavage is inefficient, and many virions are only partially matured. These uncleaved prM would play a role in immune evasion. May play a role in virus budding. Exerts cytotoxic effects by activating a mitochondrial apoptotic pathway through M ectodomain. May display a viroporin activity. In terms of biological role, binds to host cell surface receptor and mediates fusion between viral and cellular membranes. Envelope protein is synthesized in the endoplasmic reticulum in the form of heterodimer with protein prM. They play a role in virion budding in the ER, and the newly formed immature particle is covered with 60 spikes composed of heterodimer between precursor prM and envelope protein E. The virion is transported to the Golgi apparatus where the low pH causes dissociation of PrM-E heterodimers and formation of E homodimers. prM-E cleavage is inefficient, and many virions are only partially matured. These uncleaved prM would play a role in immune evasion. Its function is as follows. Involved in immune evasion, pathogenesis and viral replication. Once cleaved off the polyprotein, is targeted to three destinations: the viral replication cycle, the plasma membrane and the extracellular compartment. Essential for viral replication. Required for formation of the replication complex and recruitment of other non-structural proteins to the ER-derived membrane structures. Excreted as a hexameric lipoparticle that plays a role against host immune response. Antagonizing the complement function. Binds to the host macrophages and dendritic cells. Inhibits signal transduction originating from Toll-like receptor 3 (TLR3). Functionally, component of the viral RNA replication complex that functions in virion assembly and antagonizes the host immune response. Required cofactor for the serine protease function of NS3. May have membrane-destabilizing activity and form viroporins. In terms of biological role, displays three enzymatic activities: serine protease, NTPase and RNA helicase. NS3 serine protease, in association with NS2B, performs its autocleavage and cleaves the polyprotein at dibasic sites in the cytoplasm: C-prM, NS2A-NS2B, NS2B-NS3, NS3-NS4A, NS4A-2K and NS4B-NS5. NS3 RNA helicase binds RNA and unwinds dsRNA in the 3' to 5' direction. Also plays a role in virus assembly. Its function is as follows. Regulates the ATPase activity of the NS3 helicase activity. NS4A allows NS3 helicase to conserve energy during unwinding. Functionally, functions as a signal peptide for NS4B and is required for the interferon antagonism activity of the latter. Induces the formation of ER-derived membrane vesicles where the viral replication takes place. Inhibits interferon (IFN)-induced host STAT1 phosphorylation and nuclear translocation, thereby preventing the establishment of cellular antiviral state by blocking the IFN-alpha/beta pathway. In terms of biological role, replicates the viral (+) and (-) RNA genome, and performs the capping of genomes in the cytoplasm. NS5 methylates viral RNA cap at guanine N-7 and ribose 2'-O positions. Besides its role in RNA genome replication, also prevents the establishment of cellular antiviral state by blocking the interferon-alpha/beta (IFN-alpha/beta) signaling pathway. IFN-I induces binding of NS5 to host IFN-activated transcription factor STAT2, preventing its transcriptional activity. Host TRIM23 is the E3 ligase that interacts with and polyubiquitinates NS5 to promote its binding to STAT2 and trigger IFN-I signaling inhibition. The protein is Genome polyprotein of Aedes aegypti (Yellowfever mosquito).